We begin with the raw amino-acid sequence, 203 residues long: Large ribosomal subunit protein bL25 (203 aa).

This sequence belongs to the bacterial ribosomal protein bL25 family. CTC subfamily. In terms of assembly, part of the 50S ribosomal subunit; part of the 5S rRNA/L5/L18/L25 subcomplex. Contacts the 5S rRNA. Binds to the 5S rRNA independently of L5 and L18.

In terms of biological role, this is one of the proteins that binds to the 5S RNA in the ribosome where it forms part of the central protuberance. The polypeptide is Large ribosomal subunit protein bL25 (Chlorobium phaeovibrioides (strain DSM 265 / 1930) (Prosthecochloris vibrioformis (strain DSM 265))).